The sequence spans 685 residues: MERLFYPKVVAVIGASPQEGKVGNTIMKNLRNFSGTVYAVNPKYREILGFPCYPSVLKIPENVDLAIIVVPAKLVPKAVEECGRKDVEGAVVISAGFKEAGIEGAKLERELVEVAERYGVKLVGPNCLGMINTEIAMNATFSRVAPEKGRIAFLSQSGAFILAVLEWSKRNGVGFSKVVSLGNKAMLDESDFLEYLAKDDSTDVILIYMEGVEDGRKFMRVAKSVARRKPVVVMKAGKSQSGAKAASSHTGSLAGSYEAYRAAFRQSGVIEASSVEELFDFALLLLKYRKAGNLAILTNSGGPGVMAADACDQFGVPLANFNFETIRKLKEFLPAESNFYNPVDILGDASAERFSRSLQILSEDENVDIVLTILTPTAQMDFLKAAESVVGKNAVCCFMGGESVDESERILRSSGIPNFFDPVRAVRAISVLGRYSKISAKERVKEDLDVSVEREKAEEIIEKLLESGGRVVGAEGLPVLEAYGIEVAPYGIARNVDEARDIAESIGYPVVLKVVSPDVVHKSDVGGVKLNVGENDLEKAFFEILSNVEGRMPKARIEGVLVQKMVDGGKELIVGMKRDPQFGPMIMFGMGGVYVEVLKDVSFRIAPITRREAHEMVREVKAYRILRGLRGEKPADIDAIADLLLRVSKLSLDHPEVLEMDLNPVKVFESGYAVVDFRMVLGEEV.

The 37-residue stretch at 477–513 folds into the ATP-grasp domain; that stretch reads LPVLEAYGIEVAPYGIARNVDEARDIAESIGYPVVLK. 503–514 lines the ATP pocket; it reads AESIGYPVVLKV.

It in the N-terminal section; belongs to the acetate CoA ligase alpha subunit family. This sequence in the C-terminal section; belongs to the acetate CoA ligase beta subunit family. As to quaternary structure, homodimer.

The enzyme catalyses acetate + ATP + CoA = acetyl-CoA + ADP + phosphate. Its activity is regulated as follows. Activity requires divalent metal cations. In terms of biological role, catalyzes the reversible formation of acetate and ATP from acetyl-CoA by using ADP and phosphate. Can use other substrates such as propionyl-CoA and butyryl-CoA, but not phenylacetyl-CoA. Seems to be involved primarily in the conversion of acetyl-CoA to acetate. Participates in the degradation of branched-chain amino acids via branched-chain-acyl-CoA esters. The polypeptide is Acetate--CoA ligase [ADP-forming] I (Archaeoglobus fulgidus (strain ATCC 49558 / DSM 4304 / JCM 9628 / NBRC 100126 / VC-16)).